The sequence spans 431 residues: Adenylosuccinate lyase (431 aa).

N(6)-(1,2-dicarboxyethyl)-AMP contacts are provided by residues 4–5, 67–69, and 93–94; these read RY, NHD, and TS. H141 serves as the catalytic Proton donor/acceptor. Q212 contributes to the N(6)-(1,2-dicarboxyethyl)-AMP binding site. The Proton donor/acceptor role is filled by S262. N(6)-(1,2-dicarboxyethyl)-AMP is bound by residues S263, 268–270, and 307–311; these read KKN and SVERY.

The protein belongs to the lyase 1 family. Adenylosuccinate lyase subfamily. As to quaternary structure, homotetramer. Residues from neighboring subunits contribute catalytic and substrate-binding residues to each active site.

It carries out the reaction N(6)-(1,2-dicarboxyethyl)-AMP = fumarate + AMP. The enzyme catalyses (2S)-2-[5-amino-1-(5-phospho-beta-D-ribosyl)imidazole-4-carboxamido]succinate = 5-amino-1-(5-phospho-beta-D-ribosyl)imidazole-4-carboxamide + fumarate. It participates in purine metabolism; AMP biosynthesis via de novo pathway; AMP from IMP: step 2/2. The protein operates within purine metabolism; IMP biosynthesis via de novo pathway; 5-amino-1-(5-phospho-D-ribosyl)imidazole-4-carboxamide from 5-amino-1-(5-phospho-D-ribosyl)imidazole-4-carboxylate: step 2/2. Catalyzes two reactions in de novo purine nucleotide biosynthesis. Catalyzes the breakdown of 5-aminoimidazole- (N-succinylocarboxamide) ribotide (SAICAR or 2-[5-amino-1-(5-phospho-beta-D-ribosyl)imidazole-4-carboxamido]succinate) to 5-aminoimidazole-4-carboxamide ribotide (AICAR or 5-amino-1-(5-phospho-beta-D-ribosyl)imidazole-4-carboxamide) and fumarate, and of adenylosuccinate (ADS or N(6)-(1,2-dicarboxyethyl)-AMP) to adenosine monophosphate (AMP) and fumarate. The polypeptide is Adenylosuccinate lyase (purB) (Thermotoga maritima (strain ATCC 43589 / DSM 3109 / JCM 10099 / NBRC 100826 / MSB8)).